Consider the following 212-residue polypeptide: uncharacterized protein (212 aa).

The S-adenosyl-L-methionine site is built by G53, E74, and D96.

It belongs to the methyltransferase superfamily. YrrT family.

Could be a S-adenosyl-L-methionine-dependent methyltransferase. This is an uncharacterized protein from Anoxybacillus flavithermus (strain DSM 21510 / WK1).